We begin with the raw amino-acid sequence, 174 residues long: Methylamine utilization protein MauL (174 aa).

It functions in the pathway one-carbon metabolism; methylamine degradation. Its function is as follows. Probably involved in TTQ prosthetic group biosynthesis. This Methylophilus methylotrophus (Bacterium W3A1) protein is Methylamine utilization protein MauL (mauL).